The primary structure comprises 443 residues: Carboxypeptidase M (443 aa).

The signal sequence occupies residues 1-17 (MDRARLWLGLLLPVVAA). In terms of domain architecture, Peptidase M14 spans 21–311 (RYHHQEGMEA…ASLIEYIKQV (291 aa)). N-linked (GlcNAc...) asparagine glycosylation occurs at Asn38. 2 residues coordinate Zn(2+): His83 and Glu86. Cystine bridges form between Cys138–Cys285, Cys242–Cys284, and Cys341–Cys410. The N-linked (GlcNAc...) asparagine glycan is linked to Asn164. His190 contributes to the Zn(2+) binding site. Residue Glu281 is the Proton donor/acceptor of the active site. Asn363 carries N-linked (GlcNAc...) asparagine glycosylation. Residue Ser423 is the site of GPI-anchor amidated serine attachment. Residues 424–443 (AATKPSLGVFFMTLLYVFFK) constitute a propeptide, removed in mature form.

The protein belongs to the peptidase M14 family. Zn(2+) is required as a cofactor.

It is found in the cell membrane. The enzyme catalyses Cleavage of C-terminal arginine or lysine residues from polypeptides.. Functionally, specifically removes C-terminal basic residues (Arg or Lys) from peptides and proteins. It is believed to play important roles in the control of peptide hormone and growth factor activity at the cell surface, and in the membrane-localized degradation of extracellular proteins. The protein is Carboxypeptidase M (Cpm) of Mus musculus (Mouse).